Here is a 274-residue protein sequence, read N- to C-terminus: Phosphatidylglycerol--prolipoprotein diacylglyceryl transferase (274 aa).

Transmembrane regions (helical) follow at residues 24-44 (WYAL…RFLS), 60-80 (LLVW…VVFY), 96-116 (WHGG…TVLF), and 122-142 (LSVA…LFFG). An a 1,2-diacyl-sn-glycero-3-phospho-(1'-sn-glycerol)-binding site is contributed by arginine 143. 3 consecutive transmembrane segments (helical) span residues 182-202 (ATLE…FTAL), 207-227 (GQII…AEFF), and 241-261 (VTMG…VFVV).

It belongs to the Lgt family.

Its subcellular location is the cell inner membrane. The enzyme catalyses L-cysteinyl-[prolipoprotein] + a 1,2-diacyl-sn-glycero-3-phospho-(1'-sn-glycerol) = an S-1,2-diacyl-sn-glyceryl-L-cysteinyl-[prolipoprotein] + sn-glycerol 1-phosphate + H(+). Its pathway is protein modification; lipoprotein biosynthesis (diacylglyceryl transfer). Functionally, catalyzes the transfer of the diacylglyceryl group from phosphatidylglycerol to the sulfhydryl group of the N-terminal cysteine of a prolipoprotein, the first step in the formation of mature lipoproteins. This is Phosphatidylglycerol--prolipoprotein diacylglyceryl transferase from Rhodospirillum rubrum (strain ATCC 11170 / ATH 1.1.1 / DSM 467 / LMG 4362 / NCIMB 8255 / S1).